Consider the following 350-residue polypeptide: Probable sugar phosphate/phosphate translocator At4g32390 (350 aa).

The next 10 helical transmembrane spans lie at Ile15–Tyr35, Phe49–Ile69, Val89–Tyr109, Val112–Leu132, Met146–Trp166, Val168–Leu188, Val205–Leu225, Phe235–Leu255, Thr263–Ile283, and Thr286–Asn306. One can recognise an EamA domain in the interval Tyr38–Ile155. The segment at Gln324–Asp350 is disordered.

The protein belongs to the TPT transporter family. TPT (TC 2.A.7.9) subfamily.

It localises to the membrane. The sequence is that of Probable sugar phosphate/phosphate translocator At4g32390 from Arabidopsis thaliana (Mouse-ear cress).